Here is a 1891-residue protein sequence, read N- to C-terminus: Protein TIC 214 (1891 aa).

Transmembrane regions (helical) follow at residues 18–38, 64–84, 87–107, 124–144, 172–192, and 221–241; these read IINSVVVVGLYYGFLTTFSIG, FITGQLMMFISIYYAPLHLAL, PHTITVLALPYLLFHFFWNNH, LSIQCVFLNNLIFQLFNHFIL, VGWLIGHILFMKWLGLVLVWI, and IFSILLFITCVYYLGRIPSPI. 3 disordered regions span residues 248–300, 788–807, and 1580–1607; these read EASK…EGWD, EEQTKREEKKEKDKKEDNKR, and KNRSQEAKEPPSQRERGSDIENKGNLSP. Residues 256–268 show a composition bias toward acidic residues; the sequence is VESEEERDVEIET. Over residues 1582 to 1601 the composition is skewed to basic and acidic residues; it reads RSQEAKEPPSQRERGSDIEN.

It belongs to the TIC214 family. In terms of assembly, part of the Tic complex.

The protein resides in the plastid. Its subcellular location is the chloroplast inner membrane. Involved in protein precursor import into chloroplasts. May be part of an intermediate translocation complex acting as a protein-conducting channel at the inner envelope. This chain is Protein TIC 214, found in Solanum lycopersicum (Tomato).